The chain runs to 152 residues: 3-hydroxyacyl-[acyl-carrier-protein] dehydratase FabZ (152 aa).

H54 is an active-site residue.

Belongs to the thioester dehydratase family. FabZ subfamily.

It is found in the cytoplasm. The enzyme catalyses a (3R)-hydroxyacyl-[ACP] = a (2E)-enoyl-[ACP] + H2O. In terms of biological role, involved in unsaturated fatty acids biosynthesis. Catalyzes the dehydration of short chain beta-hydroxyacyl-ACPs and long chain saturated and unsaturated beta-hydroxyacyl-ACPs. The polypeptide is 3-hydroxyacyl-[acyl-carrier-protein] dehydratase FabZ (Buchnera aphidicola subsp. Schizaphis graminum (strain Sg)).